A 308-amino-acid polypeptide reads, in one-letter code: Ceramide synthase 1 LOH3 (308 aa).

The next 6 membrane-spanning stretches (helical) occupy residues 25–45 (VLPL…RFVF), 82–102 (CVYY…EPWF), 128–148 (LLYM…VFWE), 154–174 (FGVS…SYVC), 213–233 (FILF…FWIL), and 258–278 (YMFN…WVLM). Residues 73–287 (RKFKESAWKC…MYRMLVKQIQ (215 aa)) form the TLC domain. S298 and S300 each carry phosphoserine.

Expressed ubiquitously at low levels. Not observed in pollen.

It localises to the endoplasmic reticulum membrane. The catalysed reaction is (4R)-hydroxysphinganine + a fatty acyl-CoA = an N-acyl-(4R)-4-hydroxysphinganine + CoA + H(+). It catalyses the reaction a sphingoid base + tetracosanoyl-CoA = an N-tetracosanoyl-sphingoid base + CoA + H(+). The enzyme catalyses (4R)-hydroxysphinganine + hexadecanoyl-CoA = N-hexadecanoyl-(4R)-hydroxysphinganine + CoA + H(+). It carries out the reaction (4R)-hydroxysphinganine + octadecanoyl-CoA = N-octadecanoyl-(4R)-hydroxysphinganine + CoA + H(+). The catalysed reaction is (4R)-hydroxysphinganine + eicosanoyl-CoA = N-eicosanoyl-(4R)-hydroxysphinganine + CoA + H(+). It catalyses the reaction docosanoyl-CoA + (4R)-hydroxysphinganine = N-docosanoyl-(4R)-hydroxysphinganine + CoA + H(+). The enzyme catalyses hexacosanoyl-CoA + (4R)-hydroxysphinganine = N-hexacosanoyl-(4R)-hydroxysphinganine + CoA + H(+). It carries out the reaction tetracosanoyl-CoA + (4R)-hydroxysphinganine = N-tetracosanoyl-(4R)-hydroxysphinganine + CoA + H(+). The catalysed reaction is tetracosanoyl-CoA + sphing-4-enine = N-tetracosanoyl-sphing-4-enine + CoA + H(+). It catalyses the reaction sphinga-(4E,8Z)-dienine + tetracosanoyl-CoA = N-tetracosanoylsphinga-(4E,8Z)-dienine + CoA + H(+). The enzyme catalyses sphinga-(4E,8E)-dienine + tetracosanoyl-CoA = N-tetracosanoylsphinga-(4E,8E)-dienine + CoA + H(+). It carries out the reaction (4R)-hydroxysphing-(8Z)-enine + tetracosanoyl-CoA = N-tetracosanoyl-(4R)-hydroxysphing-(8Z)-enine + CoA + H(+). The catalysed reaction is (4R)-hydroxysphing-(8E)-enine + tetracosanoyl-CoA = N-tetracosanoyl-(4R)-hydroxysphing-(8E)-enine + CoA + H(+). The protein operates within sphingolipid metabolism. With respect to regulation, inhibited by the mycotoxin fumonisin B(1), a sphingosine analog mycotoxins produced by pathogenic fungi. Repressed by divalent cation such as magnesium Mg(2+), copper Cu(2+), zinc Zn(2+), manganese Mn(2+), calcium Ca(2+) and cobalt Co(2+). Its function is as follows. Essential for plant growth, promotes cell division in root meristems. Catalyzes the biosynthesis of ceramide sphingolipids with C(16) to C(28) fatty acids, structural membrane lipids involved in membrane trafficking (e.g. early endosomes) and cell polarity (e.g. polar auxin transport related proteins); active on a broad substrate spectrum, both regarding chain lengths of fatty acids and the sphingoid base, such as long-chain base (LCB) phytosphingosine (t18:0). Mediates resistance to sphinganine-analog mycotoxins (SAMs, e.g. fumonisin B(1)) by restoring the sphingolipid biosynthesis. Could salvage the transport of GPI-anchored proteins from the endoplasmic reticulum to the Golgi apparatus in ceramides-depleted cells after SAM exposure. Contributes to hypoxic conditions tolerance (e.g. submergences), especially in the dark, by promoting the formation of very-long-chain (VLC) ceramide species (22:1, 24:1 and 26:1) and of VLC unsaturated ceramides, which are modulating CTR1-mediated ethylene signaling leading to endoplasmic reticulum (ER)-to-nucleus translocation of EIN2 and EIN3. This is Ceramide synthase 1 LOH3 from Arabidopsis thaliana (Mouse-ear cress).